The sequence spans 235 residues: Ribonuclease 3 (235 aa).

Positions proline 8–glycine 137 constitute an RNase III domain. Glutamate 50 provides a ligand contact to Mg(2+). Aspartate 54 is a catalytic residue. Residues aspartate 123 and glutamate 126 each contribute to the Mg(2+) site. Glutamate 126 is a catalytic residue. The region spanning aspartate 163–glycine 232 is the DRBM domain. Positions glutamine 211 to glycine 235 are disordered. The segment covering alanine 226–glycine 235 has biased composition (basic and acidic residues).

The protein belongs to the ribonuclease III family. In terms of assembly, homodimer. It depends on Mg(2+) as a cofactor.

The protein localises to the cytoplasm. It carries out the reaction Endonucleolytic cleavage to 5'-phosphomonoester.. In terms of biological role, digests double-stranded RNA. Involved in the processing of primary rRNA transcript to yield the immediate precursors to the large and small rRNAs (23S and 16S). Processes some mRNAs, and tRNAs when they are encoded in the rRNA operon. Processes pre-crRNA and tracrRNA of type II CRISPR loci if present in the organism. The sequence is that of Ribonuclease 3 from Heliobacterium modesticaldum (strain ATCC 51547 / Ice1).